The sequence spans 685 residues: Tyrosinase (685 aa).

The residue at position 2 (Ser2) is an N-acetylserine. His67, His97, His106, His278, His282, and His307 together coordinate Cu cation. The 2'-(S-cysteinyl)-histidine (Cys-His) cross-link spans 95 to 97 (CTH). A propeptide spans 409–685 (ANFVENVADR…PCGHGPEDHI (277 aa)) (could be involved in enzyme activation).

It belongs to the tyrosinase family. Requires Cu(2+) as cofactor.

The catalysed reaction is 2 L-dopa + O2 = 2 L-dopaquinone + 2 H2O. It carries out the reaction L-tyrosine + O2 = L-dopaquinone + H2O. This is a copper-containing oxidase that functions in the formation of pigments such as melanins and other polyphenolic compounds. In Neurospora crassa (strain ATCC 24698 / 74-OR23-1A / CBS 708.71 / DSM 1257 / FGSC 987), this protein is Tyrosinase (T).